A 415-amino-acid polypeptide reads, in one-letter code: Serine/threonine transporter SstT (415 aa).

8 helical membrane passes run I23 to A43, L47 to V67, I85 to F105, A144 to L164, A181 to V201, L220 to F240, I293 to L313, and V333 to I353.

This sequence belongs to the dicarboxylate/amino acid:cation symporter (DAACS) (TC 2.A.23) family.

The protein resides in the cell inner membrane. It carries out the reaction L-serine(in) + Na(+)(in) = L-serine(out) + Na(+)(out). The catalysed reaction is L-threonine(in) + Na(+)(in) = L-threonine(out) + Na(+)(out). In terms of biological role, involved in the import of serine and threonine into the cell, with the concomitant import of sodium (symport system). This is Serine/threonine transporter SstT from Klebsiella pneumoniae subsp. pneumoniae (strain ATCC 700721 / MGH 78578).